We begin with the raw amino-acid sequence, 287 residues long: 2-dehydro-3-deoxyphosphooctonate aldolase (287 aa).

The protein belongs to the KdsA family.

It localises to the cytoplasm. The enzyme catalyses D-arabinose 5-phosphate + phosphoenolpyruvate + H2O = 3-deoxy-alpha-D-manno-2-octulosonate-8-phosphate + phosphate. Its pathway is carbohydrate biosynthesis; 3-deoxy-D-manno-octulosonate biosynthesis; 3-deoxy-D-manno-octulosonate from D-ribulose 5-phosphate: step 2/3. The protein operates within bacterial outer membrane biogenesis; lipopolysaccharide biosynthesis. The sequence is that of 2-dehydro-3-deoxyphosphooctonate aldolase from Magnetococcus marinus (strain ATCC BAA-1437 / JCM 17883 / MC-1).